The following is a 424-amino-acid chain: UPF0761 membrane protein Smlt0865 (424 aa).

Transmembrane regions (helical) follow at residues 48–68 (VFAL…FPVF), 101–121 (SAGQ…LITL), 144–164 (FLVY…SLAV), 181–201 (WLAE…CITL), 216–236 (AVPG…GIGA), and 251–271 (VAFV…VLLG).

The protein belongs to the UPF0761 family.

The protein resides in the cell inner membrane. The sequence is that of UPF0761 membrane protein Smlt0865 from Stenotrophomonas maltophilia (strain K279a).